Reading from the N-terminus, the 228-residue chain is Ion-translocating oxidoreductase complex subunit E (228 aa).

Transmembrane regions (helical) follow at residues Ala18–Ala38, Ile69–Ala89, Phe92–Val112, Leu125–Leu145, and Pro182–Val202.

The protein belongs to the NqrDE/RnfAE family. As to quaternary structure, the complex is composed of six subunits: RnfA, RnfB, RnfC, RnfD, RnfE and RnfG.

It localises to the cell inner membrane. In terms of biological role, part of a membrane-bound complex that couples electron transfer with translocation of ions across the membrane. The polypeptide is Ion-translocating oxidoreductase complex subunit E (Cronobacter sakazakii (strain ATCC BAA-894) (Enterobacter sakazakii)).